Here is a 56-residue protein sequence, read N- to C-terminus: Ovomucoid (56 aa).

In terms of domain architecture, Kazal-like spans 6 to 56 (VDCSEYPKPECTAEERPICGSDNKTYGNKCNFCNAVVESNGTLTLRNFGKC). 3 disulfide bridges follow: cysteine 8–cysteine 38, cysteine 16–cysteine 35, and cysteine 24–cysteine 56. N-linked (GlcNAc...) asparagine glycosylation is present at asparagine 45.

It localises to the secreted. The protein is Ovomucoid of Bambusicola thoracicus (Chinese bamboo-partridge).